A 234-amino-acid chain; its full sequence is Large ribosomal subunit protein uL1c (234 aa).

It belongs to the universal ribosomal protein uL1 family. As to quaternary structure, part of the 50S ribosomal subunit.

Its subcellular location is the plastid. It localises to the chloroplast. In terms of biological role, binds directly to 23S rRNA. Might be involved in E site tRNA release (Potential). In Guillardia theta (Cryptophyte), this protein is Large ribosomal subunit protein uL1c (rpl1).